A 340-amino-acid chain; its full sequence is Guanine nucleotide-binding protein subunit beta-1 (340 aa).

7 WD repeats span residues 53–83 (GHLA…IVWD), 95–125 (LRSS…SIYS), 141–170 (GHTG…ALWD), 182–212 (GHTG…KLWD), 224–254 (GHES…RLFD), 268–298 (NIIC…NVWD), and 310–340 (GHDN…KIWN).

The protein belongs to the WD repeat G protein beta family. In terms of assembly, g proteins are composed of 3 units, alpha, beta and gamma. Interacts with G protein gamma subunits gpc-1 and gpc-2 and with egl-10 and eat-16. Interacts with goa-1 (in GDP-bound form).

In terms of biological role, guanine nucleotide-binding proteins (G proteins) are involved as a modulator or transducer in various transmembrane signaling systems. The beta and gamma chains are required for the GTPase activity, for replacement of GDP by GTP, and for G protein-effector interaction. In the early embryo, controls the magnitude of the forces acting on centrosomes but is not required for generating asymmetric forces. This chain is Guanine nucleotide-binding protein subunit beta-1 (gpb-1), found in Caenorhabditis briggsae.